The sequence spans 164 residues: Sperm axonemal maintenance protein CFAP97D1 (164 aa).

Residues leucine 61 to alanine 88 adopt a coiled-coil conformation.

Belongs to the CFAP97 family. Expressed exclusively in testis.

Required for male fertility through its role in axonemal doublet stabilization which is essential for sperm motility and fertilization. The sequence is that of Sperm axonemal maintenance protein CFAP97D1 (Cfap97d1) from Mus musculus (Mouse).